The sequence spans 479 residues: Acetylcholine receptor subunit alpha-type acr-15 (479 aa).

A signal peptide spans 1–18 (MLLPILLHFLLLITQLNG). Over 19-230 (SPAEVRLIND…HLRRRTLYYS (212 aa)) the chain is Extracellular. N-linked (GlcNAc...) asparagine glycans are attached at residues N60 and N92. Residues C146 and C160 are joined by a disulfide bond. An N-linked (GlcNAc...) asparagine glycan is attached at N200. C208 and C209 are joined by a disulfide. A helical membrane pass occupies residues 231-251 (FNLIAPVLLTMILVILGFTVS). The Cytoplasmic portion of the chain corresponds to 252–257 (PETCEK). Residues 258 to 278 (VGLQISVSLAICIFLTIMSEL) form a helical membrane-spanning segment. The Extracellular segment spans residues 279–285 (TPQTSEA). A helical transmembrane segment spans residues 286-306 (VPLLGVFFHTCNFISVLATSF). Over 307–453 (TVYVQSFHFR…WRFAAIVVDR (147 aa)) the chain is Cytoplasmic. Residues 454–474 (LCLLAFSLLIVVVSIIIALRA) form a helical membrane-spanning segment. At 475-479 (PYLFA) the chain is on the extracellular side.

The protein belongs to the ligand-gated ion channel (TC 1.A.9) family. Acetylcholine receptor (TC 1.A.9.1) subfamily. In terms of tissue distribution, expressed in interneurons, motor neurons, pharyngeal neurons and muscles.

It localises to the cell membrane. The protein resides in the postsynaptic cell membrane. In terms of biological role, after binding acetylcholine, the AChR responds by an extensive change in conformation that affects all subunits and leads to opening of an ion-conducting channel across the plasma membrane. Activity is required in glutamatergic neurons to mediate nicotine-induced and nicotine-motivated behaviors. This Caenorhabditis elegans protein is Acetylcholine receptor subunit alpha-type acr-15.